We begin with the raw amino-acid sequence, 181 residues long: Adenine phosphoribosyltransferase (181 aa).

This sequence belongs to the purine/pyrimidine phosphoribosyltransferase family. As to quaternary structure, homodimer.

The protein resides in the cytoplasm. The catalysed reaction is AMP + diphosphate = 5-phospho-alpha-D-ribose 1-diphosphate + adenine. It functions in the pathway purine metabolism; AMP biosynthesis via salvage pathway; AMP from adenine: step 1/1. In terms of biological role, catalyzes a salvage reaction resulting in the formation of AMP, that is energically less costly than de novo synthesis. In Aliivibrio salmonicida (strain LFI1238) (Vibrio salmonicida (strain LFI1238)), this protein is Adenine phosphoribosyltransferase.